Here is a 1662-residue protein sequence, read N- to C-terminus: ABC transporter A family member 5 (1662 aa).

Helical transmembrane passes span 30 to 50, 242 to 262, 284 to 304, 317 to 337, 346 to 366, 377 to 397, and 417 to 437; these read IVFP…VQLF, SVFV…ELVV, ISWI…IIVI, IIVI…AFIF, FAGL…IFIG, LLLC…IMSI, and QIIG…WYLD. Positions 505–739 constitute an ABC transporter 1 domain; sequence ISIRNLRKEF…YGVGYLLTCS (235 aa). Residue 541 to 548 participates in ATP binding; it reads GPNGSGKS. 7 helical membrane-spanning segments follow: residues 872 to 892, 1052 to 1072, 1102 to 1122, 1130 to 1150, 1163 to 1183, 1201 to 1221, and 1246 to 1266; these read FKAF…SIIV, IVYF…SFAG, LWDY…LAIV, FGLF…LSYL, GAIT…MIIL, IIDI…VIFI, and STPI…ILLI. The region spanning 1322–1557 is the ABC transporter 2 domain; that stretch reads LQYKGLHKLF…FGAGYSVEVK (236 aa). Position 1360–1367 (1360–1367) interacts with ATP; the sequence is GLNGAGKT.

Belongs to the ABC transporter superfamily. ABCA family.

It localises to the membrane. This chain is ABC transporter A family member 5 (abcA5), found in Dictyostelium discoideum (Social amoeba).